Consider the following 112-residue polypeptide: MQSFVQQLKALSSAEDFLQFFGIPFDQKVVNVSRLHILKRFFQYIRQQDVLPEGDEAALFASYHALLLKAYGDFVISTPAQEKVFKVFQDTAGRQHVSLDSLRASLPARTVA.

Belongs to the NifW family. Homotrimer; associates with NifD.

Its function is as follows. May protect the nitrogenase Fe-Mo protein from oxidative damage. The protein is Nitrogenase-stabilizing/protective protein NifW of Paraburkholderia xenovorans (strain LB400).